Reading from the N-terminus, the 156-residue chain is Large ribosomal subunit protein uL23 (156 aa).

Positions 1–19 are enriched in basic and acidic residues; that stretch reads MAPKAKKEAPAPPKAEAKA. The tract at residues 1 to 67 is disordered; it reads MAPKAKKEAP…PKYPRKSAPR (67 aa). A2 carries the n,N,N-trimethylalanine modification. Residue K14 forms a Glycyl lysine isopeptide (Lys-Gly) (interchain with G-Cter in SUMO2) linkage. Over residues 20–67 the composition is skewed to basic residues; it reads KALKAKKAVLKGVHSHKKKKIRTSPTFRRPKTLRLRRQPKYPRKSAPR. Positions 32-74 are beta-like import receptor binding (BIB) domain; it reads VHSHKKKKIRTSPTFRRPKTLRLRRQPKYPRKSAPRRNKLDHY. R41 carries the post-translational modification Citrulline. A Phosphoserine modification is found at S43. T45 carries the phosphothreonine modification. Residue K70 is modified to N6-acetyllysine.

Belongs to the universal ribosomal protein uL23 family. As to quaternary structure, component of the large ribosomal subunit. Interacts with LYAR and GNL2. Interacts with MDM2; this interaction may promote MDM2-mediated p53/TP53 polyubiquitination. Directly interacts (via BIB domain) with IPO5, IPO7, KPNB1 and TNPO1; these interactions are involved in RPL23A nuclear import for the assembly of ribosomal subunits. Interacts with IPO8. N-terminus is methylated by METTL11A/NTM1. In terms of processing, citrullinated by PADI4.

Its subcellular location is the cytoplasm. It is found in the nucleus. Functionally, component of the large ribosomal subunit. The ribosome is a large ribonucleoprotein complex responsible for the synthesis of proteins in the cell. Binds a specific region on the 26S rRNA. May promote p53/TP53 degradation possibly through the stimulation of MDM2-mediated TP53 polyubiquitination. In Bos taurus (Bovine), this protein is Large ribosomal subunit protein uL23 (RPL23A).